Reading from the N-terminus, the 51-residue chain is Suberization-associated anionic peroxidase 1 (51 aa).

Position 30 (His30) interacts with heme. Thr31 provides a ligand contact to Ca(2+).

It belongs to the peroxidase family. Classical plant (class III) peroxidase subfamily. Heme b is required as a cofactor. Requires Ca(2+) as cofactor.

It is found in the secreted. The catalysed reaction is 2 a phenolic donor + H2O2 = 2 a phenolic radical donor + 2 H2O. Functionally, removal of H(2)O(2), oxidation of toxic reductants, biosynthesis and degradation of lignin, suberization, auxin catabolism, response to environmental stresses such as wounding, pathogen attack and oxidative stress. These functions might be dependent on each isozyme/isoform in each plant tissue. Its function is as follows. Suggested to catalyze the deposition of the aromatic residues of suberin on the cell wall and thus play a role in cell-suberization. The protein is Suberization-associated anionic peroxidase 1 of Capsicum annuum (Capsicum pepper).